Reading from the N-terminus, the 49-residue chain is uncharacterized protein (49 aa).

Residues 5-27 (ILEILSAFIRILFKLLYCWALFF) form a helical membrane-spanning segment.

The protein localises to the membrane. This is an uncharacterized protein from Saccharomyces cerevisiae (strain ATCC 204508 / S288c) (Baker's yeast).